A 506-amino-acid polypeptide reads, in one-letter code: ATP synthase subunit alpha (506 aa).

169–176 serves as a coordination point for ATP; it reads GDRQTGKT.

Belongs to the ATPase alpha/beta chains family. F-type ATPases have 2 components, CF(1) - the catalytic core - and CF(0) - the membrane proton channel. CF(1) has five subunits: alpha(3), beta(3), gamma(1), delta(1), epsilon(1). CF(0) has three main subunits: a(1), b(2) and c(9-12). The alpha and beta chains form an alternating ring which encloses part of the gamma chain. CF(1) is attached to CF(0) by a central stalk formed by the gamma and epsilon chains, while a peripheral stalk is formed by the delta and b chains.

Its subcellular location is the cell membrane. It catalyses the reaction ATP + H2O + 4 H(+)(in) = ADP + phosphate + 5 H(+)(out). In terms of biological role, produces ATP from ADP in the presence of a proton gradient across the membrane. The alpha chain is a regulatory subunit. The polypeptide is ATP synthase subunit alpha (Acetivibrio thermocellus (strain ATCC 27405 / DSM 1237 / JCM 9322 / NBRC 103400 / NCIMB 10682 / NRRL B-4536 / VPI 7372) (Clostridium thermocellum)).